The sequence spans 161 residues: Transcriptional repressor NrdR (161 aa).

The tract at residues 1–23 is disordered; sequence MRCPFCGHPDTQVKDSRPAEDGN. Residues 3 to 34 fold into a zinc finger; it reads CPFCGHPDTQVKDSRPAEDGNAIRRRRQCPSC. The segment covering 11 to 23 has biased composition (basic and acidic residues); that stretch reads TQVKDSRPAEDGN. The ATP-cone domain occupies 49-139; sequence LTVMKKSGRR…VYKDFHKVED (91 aa).

It belongs to the NrdR family. The cofactor is Zn(2+).

Its function is as follows. Negatively regulates transcription of bacterial ribonucleotide reductase nrd genes and operons by binding to NrdR-boxes. The polypeptide is Transcriptional repressor NrdR (Maricaulis maris (strain MCS10) (Caulobacter maris)).